We begin with the raw amino-acid sequence, 502 residues long: ATP synthase subunit alpha (502 aa).

169 to 176 (GDRQTGKT) lines the ATP pocket.

This sequence belongs to the ATPase alpha/beta chains family. F-type ATPases have 2 components, CF(1) - the catalytic core - and CF(0) - the membrane proton channel. CF(1) has five subunits: alpha(3), beta(3), gamma(1), delta(1), epsilon(1). CF(0) has three main subunits: a(1), b(2) and c(9-12). The alpha and beta chains form an alternating ring which encloses part of the gamma chain. CF(1) is attached to CF(0) by a central stalk formed by the gamma and epsilon chains, while a peripheral stalk is formed by the delta and b chains.

The protein localises to the cell inner membrane. The enzyme catalyses ATP + H2O + 4 H(+)(in) = ADP + phosphate + 5 H(+)(out). Its function is as follows. Produces ATP from ADP in the presence of a proton gradient across the membrane. The alpha chain is a regulatory subunit. The chain is ATP synthase subunit alpha from Solidesulfovibrio magneticus (strain ATCC 700980 / DSM 13731 / RS-1) (Desulfovibrio magneticus).